The sequence spans 421 residues: Forkhead box protein fkh-3 (421 aa).

Positions R118 to K218 form a DNA-binding region, fork-head.

The protein resides in the nucleus. Its function is as follows. Transcription factor. Binds to DNA sequence motif 5'-CTGTTTCA-3'. Regulates expression of a class of small RNAs, known as 21U-RNAs, perhaps acting redundantly with fkh-4 and fkh-5. This chain is Forkhead box protein fkh-3, found in Caenorhabditis elegans.